We begin with the raw amino-acid sequence, 70 residues long: Putative membrane protein insertion efficiency factor (70 aa).

Belongs to the UPF0161 family.

It is found in the cell inner membrane. Could be involved in insertion of integral membrane proteins into the membrane. The protein is Putative membrane protein insertion efficiency factor of Desulforapulum autotrophicum (strain ATCC 43914 / DSM 3382 / VKM B-1955 / HRM2) (Desulfobacterium autotrophicum).